Reading from the N-terminus, the 40-residue chain is Photosystem II reaction center protein J (40 aa).

A helical transmembrane segment spans residues 8-28 (IPLWIIGTVTGILVIGLIGIF).

Belongs to the PsbJ family. As to quaternary structure, PSII is composed of 1 copy each of membrane proteins PsbA, PsbB, PsbC, PsbD, PsbE, PsbF, PsbH, PsbI, PsbJ, PsbK, PsbL, PsbM, PsbT, PsbX, PsbY, PsbZ, Psb30/Ycf12, at least 3 peripheral proteins of the oxygen-evolving complex and a large number of cofactors. It forms dimeric complexes.

Its subcellular location is the plastid. The protein localises to the chloroplast thylakoid membrane. In terms of biological role, one of the components of the core complex of photosystem II (PSII). PSII is a light-driven water:plastoquinone oxidoreductase that uses light energy to abstract electrons from H(2)O, generating O(2) and a proton gradient subsequently used for ATP formation. It consists of a core antenna complex that captures photons, and an electron transfer chain that converts photonic excitation into a charge separation. The protein is Photosystem II reaction center protein J of Eucalyptus globulus subsp. globulus (Tasmanian blue gum).